The following is an 820-amino-acid chain: Protein phosphatase 1 regulatory subunit 29 (820 aa).

A signal peptide spans M1–A22. Over D23–Y397 the chain is Extracellular. N-linked (GlcNAc...) asparagine glycosylation occurs at N54. LRR repeat units follow at residues T56–R77, N80–G101, S104–G125, R128–E149, and S152–S173. N-linked (GlcNAc...) asparagine glycans are attached at residues N80, N85, and N117. Residues N185–N247 form the LRRCT domain. N205 and N247 each carry an N-linked (GlcNAc...) asparagine glycan. The interval L250 to S294 is disordered. Residues D292–T379 enclose the Fibronectin type-III domain. The helical transmembrane segment at I398–C418 threads the bilayer. The Cytoplasmic portion of the chain corresponds to L419–L820. Disordered regions lie at residues G508–G527 and S589–H612. Phosphoserine is present on residues S619, S668, and S672. Residues T654–L677 are disordered.

As to quaternary structure, interacts with PPP1CA.

The protein localises to the membrane. Functionally, inhibits phosphatase activity of protein phosphatase 1 (PP1) complexes. The chain is Protein phosphatase 1 regulatory subunit 29 (ELFN2) from Homo sapiens (Human).